Here is a 355-residue protein sequence, read N- to C-terminus: C-C chemokine receptor type 3 (355 aa).

Residues 1 to 34 (MTTSLDTVETFGPTSYDDDMGLLCEKADVGALIA) lie on the Extracellular side of the membrane. The chain crosses the membrane as a helical span at residues 35-62 (QFVPPLYSLVFMVGLLGNVVVVMILIKY). The Cytoplasmic portion of the chain corresponds to 63–72 (RRLRIMTNIY). Residues 73-93 (LLNLAISDLLFLFTLPFWIHY) traverse the membrane as a helical segment. The Extracellular segment spans residues 94 to 107 (VRERNWVFSHGMCK). A disulfide bridge connects residues Cys106 and Cys183. A helical membrane pass occupies residues 108 to 129 (VLSGFYHTGLYSEIFFIILLTI). The Cytoplasmic portion of the chain corresponds to 130–146 (DRYLAIVHAVFALRART). Residues 147–171 (VTFGVVTSIVTWGLAVLAALPEFIF) form a helical membrane-spanning segment. Residues 172–203 (YGTEELFPETLCSAIYPQDTVYSWRHFHTLRM) lie on the Extracellular side of the membrane. The chain crosses the membrane as a helical span at residues 204–223 (TILCLALPLLVMAICYTGII). Residues 224 to 239 (KTLLRCPSKKKYKAIR) are Cytoplasmic-facing. A helical transmembrane segment spans residues 240 to 264 (LIFVIMAVFFIFWTPYNVAILISTY). The Extracellular segment spans residues 265-281 (QSILFGPDCERSKHLDL). A helical transmembrane segment spans residues 282–305 (FVLVTEVIAYSHCWVNPVIYAFVG). Residues 306 to 355 (ERFRKYLRHFFHRHVLMHPGKYIPFLPSEKLERTSSVSPSTAEPELSIVF) are Cytoplasmic-facing.

The protein belongs to the G-protein coupled receptor 1 family.

It localises to the cell membrane. Its function is as follows. Receptor for C-C type chemokine. Binds and responds to a variety of chemokines, including CCL11, CCL26, CCL7, CCL13, RANTES(CCL5) and CCL15. Subsequently transduces a signal by increasing the intracellular calcium ions level. In addition acts as a possible functional receptor for NARS1. The protein is C-C chemokine receptor type 3 (CCR3) of Macaca fascicularis (Crab-eating macaque).